Reading from the N-terminus, the 315-residue chain is Methionyl-tRNA formyltransferase (315 aa).

113–116 (SILP) contributes to the (6S)-5,6,7,8-tetrahydrofolate binding site.

The protein belongs to the Fmt family.

The catalysed reaction is L-methionyl-tRNA(fMet) + (6R)-10-formyltetrahydrofolate = N-formyl-L-methionyl-tRNA(fMet) + (6S)-5,6,7,8-tetrahydrofolate + H(+). Attaches a formyl group to the free amino group of methionyl-tRNA(fMet). The formyl group appears to play a dual role in the initiator identity of N-formylmethionyl-tRNA by promoting its recognition by IF2 and preventing the misappropriation of this tRNA by the elongation apparatus. The chain is Methionyl-tRNA formyltransferase from Vibrio vulnificus (strain CMCP6).